The following is a 534-amino-acid chain: Probable DNA ligase (534 aa).

E213 contributes to the ATP binding site. Catalysis depends on K215, which acts as the N6-AMP-lysine intermediate. ATP contacts are provided by R220, R235, E264, F303, R375, and K381.

The protein belongs to the ATP-dependent DNA ligase family. The cofactor is Mg(2+).

The enzyme catalyses ATP + (deoxyribonucleotide)n-3'-hydroxyl + 5'-phospho-(deoxyribonucleotide)m = (deoxyribonucleotide)n+m + AMP + diphosphate.. DNA ligase that seals nicks in double-stranded DNA during DNA replication, DNA recombination and DNA repair. The protein is Probable DNA ligase of Mycolicibacterium vanbaalenii (strain DSM 7251 / JCM 13017 / BCRC 16820 / KCTC 9966 / NRRL B-24157 / PYR-1) (Mycobacterium vanbaalenii).